The chain runs to 115 residues: NAD(P)H-quinone oxidoreductase subunit M (115 aa).

It belongs to the complex I NdhM subunit family. NDH-1 can be composed of about 15 different subunits; different subcomplexes with different compositions have been identified which probably have different functions.

The protein localises to the cellular thylakoid membrane. It catalyses the reaction a plastoquinone + NADH + (n+1) H(+)(in) = a plastoquinol + NAD(+) + n H(+)(out). The catalysed reaction is a plastoquinone + NADPH + (n+1) H(+)(in) = a plastoquinol + NADP(+) + n H(+)(out). NDH-1 shuttles electrons from an unknown electron donor, via FMN and iron-sulfur (Fe-S) centers, to quinones in the respiratory and/or the photosynthetic chain. The immediate electron acceptor for the enzyme in this species is believed to be plastoquinone. Couples the redox reaction to proton translocation, and thus conserves the redox energy in a proton gradient. Cyanobacterial NDH-1 also plays a role in inorganic carbon-concentration. This Prochlorococcus marinus (strain NATL1A) protein is NAD(P)H-quinone oxidoreductase subunit M.